Consider the following 247-residue polypeptide: 4-hydroxy-tetrahydrodipicolinate reductase (247 aa).

NAD(+) is bound by residues G12–M17, G78–T80, and A102–F105. H136 (proton donor/acceptor) is an active-site residue. (S)-2,3,4,5-tetrahydrodipicolinate is bound at residue H137. K140 acts as the Proton donor in catalysis. A (S)-2,3,4,5-tetrahydrodipicolinate-binding site is contributed by G146–T147.

It belongs to the DapB family.

The protein resides in the cytoplasm. The catalysed reaction is (S)-2,3,4,5-tetrahydrodipicolinate + NAD(+) + H2O = (2S,4S)-4-hydroxy-2,3,4,5-tetrahydrodipicolinate + NADH + H(+). It carries out the reaction (S)-2,3,4,5-tetrahydrodipicolinate + NADP(+) + H2O = (2S,4S)-4-hydroxy-2,3,4,5-tetrahydrodipicolinate + NADPH + H(+). It participates in amino-acid biosynthesis; L-lysine biosynthesis via DAP pathway; (S)-tetrahydrodipicolinate from L-aspartate: step 4/4. Its function is as follows. Catalyzes the conversion of 4-hydroxy-tetrahydrodipicolinate (HTPA) to tetrahydrodipicolinate. The polypeptide is 4-hydroxy-tetrahydrodipicolinate reductase (Acidiphilium cryptum (strain JF-5)).